We begin with the raw amino-acid sequence, 338 residues long: Heat-inducible transcription repressor HrcA (338 aa).

It belongs to the HrcA family.

Its function is as follows. Negative regulator of class I heat shock genes (grpE-dnaK-dnaJ and groELS operons). Prevents heat-shock induction of these operons. The sequence is that of Heat-inducible transcription repressor HrcA from Bacillus thuringiensis (strain Al Hakam).